The following is a 279-amino-acid chain: L-ascorbate peroxidase 5, peroxisomal (279 aa).

Residue His39 is the Proton acceptor of the active site. The tract at residues 111–134 (PFTPGRKDADSADDGELPNPNEGA) is disordered. Position 158 (His158) interacts with heme b. Thr159, Thr175, and Asp182 together coordinate K(+). Residues 251–271 (AVTQQTLGIAVAAAVVIFTIC) traverse the membrane as a helical segment. Residues 272–279 (YEASRRGK) carry the AKR2A-binding sequence (ABS) required for peroxisome membrane targeting motif.

This sequence belongs to the peroxidase family. Ascorbate peroxidase subfamily. As to quaternary structure, interacts with AKR2A and AKR2B. Heme b serves as cofactor.

Its subcellular location is the peroxisome membrane. It catalyses the reaction L-ascorbate + H2O2 = L-dehydroascorbate + 2 H2O. Functionally, plays a key role in hydrogen peroxide removal. The protein is L-ascorbate peroxidase 5, peroxisomal (APX5) of Arabidopsis thaliana (Mouse-ear cress).